Consider the following 580-residue polypeptide: MDEELPDAVVFKDQNFSSDLLRQLNGLRQSKILTDVSICSGACEVPCHRNVLASSSPYFRAMFCSHFRESREAKVQLKGISSTTLEQVIAYVYTGEVHISAANVLPLMEAAAMLQYPRMFEACSSYLQSQLAPSNCLGLVRLAEILSCDSLKKKAREVALTYFPEVAASADLKELCVMELRDYLGDDKLCGEEEKVFEALMAWVKHDLQARWRYMQELLQQVRLQYIHPAFFHHFIASDALLQSSPACQAILEMAKKQIFSLYGPSAQDCKLWHTPPRSSYQDFLLLLGGRKDNQQTTRDVLLYSIQTGQWQSLAKLPTRLYKASAVTLHRSVYVLGGMAVREGKGLISCSVYIFSMKLNQWRMGEPMLAARYSHRSTTHRNFIFSIGGTGEGQELLGSMERYDSIRDVWESMADMPMAVLHPAVAVKDQRLYLFGGEDIMQNPVRLIQVYHISRNTWYKMETRMIKNVCAPAVVLGEKIIIVGGYTRRILAYDPQSNKFVKCADMKDRRMHHGATVMGNKLYVTGGRRLTTDCNIEDSASFDCYDPETDTWTSQGQLPHTLFDHACLTLQCIPHMTSLS.

In terms of domain architecture, BTB spans threonine 34–alanine 101. The 102-residue stretch at cysteine 136–alanine 237 folds into the BACK domain. Kelch repeat units follow at residues phenylalanine 284–arginine 331, valine 333–asparagine 382, phenylalanine 383–glutamine 430, leucine 432–glutamate 478, lysine 479–asparagine 520, and leucine 522–cysteine 572.

The sequence is that of Kelch-like protein 38 (Klhl38) from Rattus norvegicus (Rat).